The chain runs to 1173 residues: RNA polymerase-associated protein CTR9 homolog (1173 aa).

TPR repeat units lie at residues 41–75 (LHIW…NLDY), 129–162 (NHLL…SPNN), 163–196 (IPAL…NPGC), 198–231 (AEVR…NSKC), 235–268 (LVGL…DPSN), 306–339 (AESC…ASSS), 341–374 (VLPF…YPNN), 412–444 (VEAW…LQEK), 451–484 (PEIL…AKAE), 497–530 (VTTS…HPNY), 531–564 (VDCY…NQDH), 566–598 (DAWS…PATQ), 613–646 (QTLH…DAKN), 647–680 (LYAA…TADI), 681–714 (SDVW…FYKH), and 717–750 (TEVV…APSD). The interval 892 to 1173 (TGETEATKEK…GSEHGSDDSD (282 aa)) is disordered. Over residues 900-912 (EKKRGGGGGRRSK) the composition is skewed to basic residues. Residues 917 to 929 (FDEFVNDDTDDDL) are compositionally biased toward acidic residues. Residue threonine 925 is modified to Phosphothreonine. Serine 932, serine 941, serine 943, and serine 970 each carry phosphoserine. The segment covering 980–994 (KPKKRRPPRAEKKKA) has biased composition (basic residues). A phosphoserine mark is found at serine 1020 and serine 1021. The span at 1023-1034 (EDKLKIADEGHP) shows a compositional bias: basic and acidic residues. Serine 1037, serine 1039, serine 1041, serine 1079, serine 1083, serine 1085, serine 1095, and serine 1100 each carry phosphoserine. The segment covering 1097 to 1128 (SEQSDNESVQSGRSPSGASENENDSRPASPSA) has biased composition (polar residues). Positions 1137-1159 (GSDNEGSGQGSGNESEPEGSNNE) are enriched in low complexity. The segment covering 1160-1173 (ASDRGSEHGSDDSD) has biased composition (basic and acidic residues).

Component of the PAF1 complex, which consists of CDC73, PAF1, LEO1, CTR9, RTF1 and SKIC8. The PAF1 complex interacts with PHF5A. Interacts with KMT2A/MLL1. Interacts with STAT3. Interacts with SETD5. Interacts with ERCC6. Widely expressed.

Its subcellular location is the nucleus speckle. Functionally, component of the PAF1 complex (PAF1C) which has multiple functions during transcription by RNA polymerase II and is implicated in regulation of development and maintenance of embryonic stem cell pluripotency. PAF1C associates with RNA polymerase II through interaction with POLR2A CTD non-phosphorylated and 'Ser-2'- and 'Ser-5'-phosphorylated forms and is involved in transcriptional elongation, acting both independently and synergistically with TCEA1 and in cooperation with the DSIF complex and HTATSF1. PAF1C is required for transcription of Hox and Wnt target genes. PAF1C is involved in hematopoiesis and stimulates transcriptional activity of KMT2A/MLL1. PAF1C is involved in histone modifications such as ubiquitination of histone H2B and methylation on histone H3 'Lys-4' (H3K4me3). PAF1C recruits the RNF20/40 E3 ubiquitin-protein ligase complex and the E2 enzyme UBE2A or UBE2B to chromatin which mediate monoubiquitination of 'Lys-120' of histone H2B (H2BK120ub1); UB2A/B-mediated H2B ubiquitination is proposed to be coupled to transcription. PAF1C is involved in mRNA 3' end formation probably through association with cleavage and poly(A) factors. Required for mono- and trimethylation on histone H3 'Lys-4' (H3K4me3) and dimethylation on histone H3 'Lys-79' (H3K4me3). Required for Hox gene transcription. Required for the trimethylation of histone H3 'Lys-4' (H3K4me3) on genes involved in stem cell pluripotency; this function is synergistic with CXXC1 indicative for an involvement of the SET1 complex. Involved in transcriptional regulation of IL6-responsive genes and in JAK-STAT pathway; may regulate DNA-association of STAT3. The sequence is that of RNA polymerase-associated protein CTR9 homolog (Ctr9) from Mus musculus (Mouse).